A 30-amino-acid polypeptide reads, in one-letter code: Rothein 3.1 (30 aa).

Leucine amide is present on Leu30.

Expressed by the skin dorsal glands.

The protein resides in the secreted. Lacks antimicrobial activity. Does not inhibit the formation of NO by neuronal nitric oxide. This Litoria rothii (Roth's tree frog) protein is Rothein 3.1.